We begin with the raw amino-acid sequence, 716 residues long: Interleukin-31 receptor subunit alpha (716 aa).

The first 18 residues, 1 to 18 (MWTLALWAFSFLCKFSLA), serve as a signal peptide directing secretion. Over 19–499 (VLPTKPENIS…TNGVRINFKT (481 aa)) the chain is Extracellular. Fibronectin type-III domains lie at 23–115 (KPEN…IAKT), 117–211 (PPII…TMEE), 213–304 (PHVL…ILRI), 305–403 (PDVH…QAYA), and 408–502 (PLKG…TLSI). N-linked (GlcNAc...) asparagine glycosylation is found at asparagine 36, asparagine 48, and asparagine 64. N-linked (GlcNAc...) asparagine glycosylation occurs at asparagine 382. A helical transmembrane segment spans residues 500 to 520 (LSISVFEIVLLTSLVGGGLLL). Residues 521–716 (LSIKTVTFGL…NIPEHSKGEV (196 aa)) are Cytoplasmic-facing. 2 disordered regions span residues 622–641 (EYVT…FKEP) and 648–696 (ASED…LKNS). Polar residues predominate over residues 670–679 (QPSSSCQSPG).

The protein belongs to the type I cytokine receptor family. Type 2 subfamily. As to quaternary structure, heterodimer with OSMR. Interacts with JAK1 and STAT3. Post-translationally, N-glycosylated. As to expression, expressed in a subset of dorsal root ganglia neurons. Expressed in spinal cord and trigeminal ganglion (at protein level). Expressed in skin, testis, bone marrow and thymus.

The protein localises to the cell membrane. It localises to the presynaptic cell membrane. Its subcellular location is the cell projection. The protein resides in the axon. Associates with OSMR to form the interleukin-31 receptor which activates STAT3 and to a lower extent STAT1 and STAT5. May function in skin immunity. Mediates IL31-induced itch, probably in a manner dependent on cation channels TRPA1 and TRPV1. Positively regulates numbers and cycling status of immature subsets of myeloid progenitor cells in bone marrow in vivo and enhances myeloid progenitor cell survival in vitro. In Mus musculus (Mouse), this protein is Interleukin-31 receptor subunit alpha (Il31ra).